The following is a 171-amino-acid chain: ATP synthase subunit b (171 aa).

A helical membrane pass occupies residues 2–22 (FLVKMVLGFLIFLSPLCATGL).

Belongs to the ATPase B chain family. As to quaternary structure, F-type ATPases have 2 components, F(1) - the catalytic core - and F(0) - the membrane proton channel. F(1) has five subunits: alpha(3), beta(3), gamma(1), delta(1), epsilon(1). F(0) has three main subunits: a(1), b(2) and c(10-14). The alpha and beta chains form an alternating ring which encloses part of the gamma chain. F(1) is attached to F(0) by a central stalk formed by the gamma and epsilon chains, while a peripheral stalk is formed by the delta and b chains.

Its subcellular location is the cell inner membrane. Functionally, f(1)F(0) ATP synthase produces ATP from ADP in the presence of a proton or sodium gradient. F-type ATPases consist of two structural domains, F(1) containing the extramembraneous catalytic core and F(0) containing the membrane proton channel, linked together by a central stalk and a peripheral stalk. During catalysis, ATP synthesis in the catalytic domain of F(1) is coupled via a rotary mechanism of the central stalk subunits to proton translocation. Component of the F(0) channel, it forms part of the peripheral stalk, linking F(1) to F(0). This is ATP synthase subunit b from Helicobacter pylori (strain Shi470).